A 1314-amino-acid polypeptide reads, in one-letter code: Angiotensin-converting enzyme (1314 aa).

The first 35 residues, 1-35 (MGAASGQRGQGPPSPLLLLWLSLLLLLLPPSPAPA), serve as a signal peptide directing secretion. Residues 36–1265 (LDPGLQPGNF…LEPQQARVGQ (1230 aa)) lie on the Extracellular side of the membrane. N-linked (GlcNAc...) asparagine glycosylation is found at Asn-44, Asn-60, Asn-80, Asn-117, and Asn-166. Peptidase M2 domains lie at 46–630 (SADE…LGWP) and 649–1228 (VTDE…LGWP). A disulfide bridge connects residues Cys-163 and Cys-171. Tyr-237 contributes to the chloride binding site. Asn-324 carries an N-linked (GlcNAc...) asparagine glycan. Cys-365 and Cys-383 form a disulfide bridge. Residue His-396 participates in Zn(2+) binding. Glu-397 acts as the Proton acceptor 1 in catalysis. 2 residues coordinate Zn(2+): His-400 and Glu-424. Asn-515 carries an N-linked (GlcNAc...) asparagine glycan. The Proton donor 1 role is filled by His-526. Arg-535 is a chloride binding site. A disulfide bridge links Cys-551 with Cys-563. N-linked (GlcNAc...) asparagine glycosylation is found at Asn-683, Asn-701, Asn-720, and Asn-766. A disulfide bond links Cys-763 and Cys-769. Chloride is bound by residues Arg-797 and Tyr-835. The N-linked (GlcNAc...) asparagine glycan is linked to Asn-948. Cys-963 and Cys-981 are oxidised to a cystine. His-994 serves as a coordination point for Zn(2+). Glu-995 serves as the catalytic Proton acceptor 2. Zn(2+) contacts are provided by His-998 and Glu-1022. 2 residues coordinate chloride: Trp-1096 and Arg-1100. The active-site Proton donor 2 is His-1124. Arg-1133 is a binding site for chloride. A disulfide bridge connects residues Cys-1149 and Cys-1161. A glycan (N-linked (GlcNAc...) asparagine) is linked at Asn-1197. Positions 1221-1262 (HGETLGWPEYNWTPNTARSEGPFPESGRVNFLGMYLEPQQAR) are juxtamembrane stalk. Residues 1266–1282 (WVLLFLGVSLLVATLGL) traverse the membrane as a helical segment. Residues 1283–1314 (THRLFSIRQHGHSLHRPHRGPQFGSEVELRHS) are Cytoplasmic-facing. Residues 1293–1314 (GHSLHRPHRGPQFGSEVELRHS) form a disordered region. Position 1307 is a phosphoserine (Ser-1307).

Belongs to the peptidase M2 family. In terms of assembly, monomer and homodimer; homodimerizes following binding to an inhibitor. Interacts with calmodulin (CALM1, CALM2 or CALM3); interaction takes place in the cytoplasmic region and regulates phosphorylation and proteolytic cleavage. Requires Zn(2+) as cofactor. Chloride serves as cofactor. In terms of processing, produced following proteolytic cleavage by secretase enzymes that cleave the transmembrane form in the juxtamembrane stalk region upstream of the transmembrane region. Cleavage can take place at different sites of the juxtamembrane stalk region. Phosphorylated by CK2 on Ser-1307; which allows membrane retention. Phosphorylated on tyrosine residues on its extracellular part, promoting cleavage by secretase enzymes and formation of the soluble form (Angiotensin-converting enzyme, soluble form). Widely expressed with dominant expression in lung and kidney.

The protein resides in the cell membrane. It localises to the cytoplasm. The protein localises to the secreted. The catalysed reaction is Release of a C-terminal dipeptide, oligopeptide-|-Xaa-Yaa, when Xaa is not Pro, and Yaa is neither Asp nor Glu. Thus, conversion of angiotensin I to angiotensin II, with increase in vasoconstrictor activity, but no action on angiotensin II.. It carries out the reaction angiotensin I + H2O = L-histidyl-L-leucine + angiotensin II. It catalyses the reaction bradykinin + H2O = L-Phe-L-Arg + bradykinin(1-7). The enzyme catalyses substance P + H2O = substance P(1-9) + L-Leu-L-Met-NH2. The catalysed reaction is substance P + H2O = substance P(1-8) + Gly-L-Leu-L-Met-NH2. It carries out the reaction substance P + H2O = L-Phe-L-Phe-Gly-L-Leu-L-Met-NH2 + substance P(1-6). It catalyses the reaction neurotensin + H2O = neurotensin(1-11) + L-isoleucyl-L-leucine. The enzyme catalyses goralatide + H2O = N-acetyl-L-seryl-L-aspartate + L-lysyl-L-proline. The catalysed reaction is Met-enkephalin + H2O = L-phenylalanyl-L-methionine + L-tyrosylglycylglycine. It carries out the reaction Leu-enkephalin + H2O = L-tyrosylglycylglycine + L-phenylalanyl-L-leucine. It catalyses the reaction Met-enkephalin-Arg-Phe + H2O = L-arginyl-L-phenylalanine + Met-enkephalin. With respect to regulation, the dipeptidyl carboxypeptidase activity is strongly activated by chloride. The dipeptidyl carboxypeptidase activity is specifically inhibited by lisinopril, captopril and enalaprilat. Its activity is regulated as follows. Strongly inhibited by lisinopril and captopril. Dipeptidyl carboxypeptidase that removes dipeptides from the C-terminus of a variety of circulating hormones, such as angiotensin I, bradykinin or enkephalins, thereby playing a key role in the regulation of blood pressure, electrolyte homeostasis or synaptic plasticity. Composed of two similar catalytic domains, each possessing a functional active site, with different selectivity for substrates. Plays a major role in the angiotensin-renin system that regulates blood pressure and sodium retention by the kidney by converting angiotensin I to angiotensin II, resulting in an increase of the vasoconstrictor activity of angiotensin. Also able to inactivate bradykinin, a potent vasodilator, and therefore enhance the blood pressure response. Acts as a regulator of synaptic transmission by mediating cleavage of neuropeptide hormones, such as substance P, neurotensin or enkephalins. Catalyzes degradation of different enkephalin neuropeptides (Met-enkephalin, Leu-enkephalin, Met-enkephalin-Arg-Phe and possibly Met-enkephalin-Arg-Gly-Leu). Acts as a regulator of synaptic plasticity in the nucleus accumbens of the brain by mediating cleavage of Met-enkephalin-Arg-Phe, a strong ligand of Mu-type opioid receptor OPRM1, into Met-enkephalin. Met-enkephalin-Arg-Phe cleavage by ACE decreases activation of OPRM1, leading to long-term synaptic potentiation of glutamate release. Also acts as a regulator of hematopoietic stem cell differentiation by mediating degradation of hemoregulatory peptide N-acetyl-SDKP (AcSDKP). Acts as a regulator of cannabinoid signaling pathway by mediating degradation of hemopressin, an antagonist peptide of the cannabinoid receptor CNR1. Involved in amyloid-beta metabolism by catalyzing degradation of Amyloid-beta protein 40 and Amyloid-beta protein 42 peptides, thereby preventing plaque formation. Catalyzes cleavage of cholecystokinin (maturation of Cholecystokinin-8 and Cholecystokinin-5) and Gonadoliberin-1 (both maturation and degradation) hormones. Degradation of hemoregulatory peptide N-acetyl-SDKP (AcSDKP) and amyloid-beta proteins is mediated by the N-terminal catalytic domain, while angiotensin I and cholecystokinin cleavage is mediated by the C-terminal catalytic region. Functionally, soluble form that is released in blood plasma and other body fluids following proteolytic cleavage in the juxtamembrane stalk region. In terms of biological role, isoform produced by alternative promoter usage that is specifically expressed in spermatocytes and adult testis, and which is required for male fertility. In contrast to somatic isoforms, only contains one catalytic domain. Acts as a dipeptidyl carboxypeptidase that removes dipeptides from the C-terminus of substrates. The identity of substrates that are needed for male fertility is unknown. May also have a glycosidase activity which releases GPI-anchored proteins from the membrane by cleaving the mannose linkage in the GPI moiety. The GPIase activity was reported to be essential for the egg-binding ability of the sperm. This activity is however unclear and has been challenged by other groups, suggesting that it may be indirect. This chain is Angiotensin-converting enzyme, found in Mesocricetus auratus (Golden hamster).